The following is a 265-amino-acid chain: 3-methyl-2-oxobutanoate hydroxymethyltransferase (265 aa).

The Mg(2+) site is built by aspartate 45 and aspartate 84. Residues 45-46 (DS), aspartate 84, and lysine 112 each bind 3-methyl-2-oxobutanoate. Glutamate 114 is a Mg(2+) binding site. Glutamate 181 serves as the catalytic Proton acceptor.

The protein belongs to the PanB family. As to quaternary structure, homodecamer; pentamer of dimers. It depends on Mg(2+) as a cofactor.

It is found in the cytoplasm. The catalysed reaction is 3-methyl-2-oxobutanoate + (6R)-5,10-methylene-5,6,7,8-tetrahydrofolate + H2O = 2-dehydropantoate + (6S)-5,6,7,8-tetrahydrofolate. Its pathway is cofactor biosynthesis; (R)-pantothenate biosynthesis; (R)-pantoate from 3-methyl-2-oxobutanoate: step 1/2. In terms of biological role, catalyzes the reversible reaction in which hydroxymethyl group from 5,10-methylenetetrahydrofolate is transferred onto alpha-ketoisovalerate to form ketopantoate. This is 3-methyl-2-oxobutanoate hydroxymethyltransferase from Pectobacterium carotovorum subsp. carotovorum (strain PC1).